The sequence spans 556 residues: Urocanate hydratase (556 aa).

NAD(+) contacts are provided by residues 52-53 (GG), Gln-130, 176-178 (GMG), Glu-196, Arg-201, 243-244 (NA), 264-268 (QTSAH), 274-275 (YL), and Tyr-323. The active site involves Cys-411. Gly-493 contributes to the NAD(+) binding site.

It belongs to the urocanase family. NAD(+) is required as a cofactor.

Its subcellular location is the cytoplasm. The enzyme catalyses 4-imidazolone-5-propanoate = trans-urocanate + H2O. It functions in the pathway amino-acid degradation; L-histidine degradation into L-glutamate; N-formimidoyl-L-glutamate from L-histidine: step 2/3. Functionally, catalyzes the conversion of urocanate to 4-imidazolone-5-propionate. The sequence is that of Urocanate hydratase from Rhodospirillum rubrum (strain ATCC 11170 / ATH 1.1.1 / DSM 467 / LMG 4362 / NCIMB 8255 / S1).